The chain runs to 410 residues: 3-phosphoshikimate 1-carboxyvinyltransferase (410 aa).

Lysine 27, serine 28, and arginine 32 together coordinate 3-phosphoshikimate. Lysine 27 serves as a coordination point for phosphoenolpyruvate. Phosphoenolpyruvate contacts are provided by glycine 91 and arginine 119. Serine 161, serine 162, glutamine 163, aspartate 297, glutamine 319, and lysine 323 together coordinate 3-phosphoshikimate. Glutamine 163 is a phosphoenolpyruvate binding site. Aspartate 297 serves as the catalytic Proton acceptor. Phosphoenolpyruvate-binding residues include arginine 327, arginine 368, and lysine 394.

The protein belongs to the EPSP synthase family. In terms of assembly, monomer.

The protein resides in the cytoplasm. It catalyses the reaction 3-phosphoshikimate + phosphoenolpyruvate = 5-O-(1-carboxyvinyl)-3-phosphoshikimate + phosphate. It participates in metabolic intermediate biosynthesis; chorismate biosynthesis. Catalyzes the transfer of the enolpyruvyl moiety of phosphoenolpyruvate (PEP) to the 5-hydroxyl of shikimate-3-phosphate (S3P) to produce enolpyruvyl shikimate-3-phosphate and inorganic phosphate. In Pyrococcus abyssi (strain GE5 / Orsay), this protein is 3-phosphoshikimate 1-carboxyvinyltransferase.